Here is a 485-residue protein sequence, read N- to C-terminus: Glycogen synthase (485 aa).

Lys15 is an ADP-alpha-D-glucose binding site.

It belongs to the glycosyltransferase 1 family. Bacterial/plant glycogen synthase subfamily.

The enzyme catalyses [(1-&gt;4)-alpha-D-glucosyl](n) + ADP-alpha-D-glucose = [(1-&gt;4)-alpha-D-glucosyl](n+1) + ADP + H(+). Its pathway is glycan biosynthesis; glycogen biosynthesis. In terms of biological role, synthesizes alpha-1,4-glucan chains using ADP-glucose. The polypeptide is Glycogen synthase (Geobacillus thermodenitrificans (strain NG80-2)).